A 485-amino-acid chain; its full sequence is Kynureninase 1 (485 aa).

Pyridoxal 5'-phosphate is bound by residues L155, T156, 183–186 (FPSD), D267, H270, and Y292. N6-(pyridoxal phosphate)lysine is present on K293. 2 residues coordinate pyridoxal 5'-phosphate: W330 and N358.

This sequence belongs to the kynureninase family. As to quaternary structure, homodimer. Pyridoxal 5'-phosphate serves as cofactor.

The protein localises to the cytoplasm. It carries out the reaction L-kynurenine + H2O = anthranilate + L-alanine + H(+). The catalysed reaction is 3-hydroxy-L-kynurenine + H2O = 3-hydroxyanthranilate + L-alanine + H(+). Its pathway is amino-acid degradation; L-kynurenine degradation; L-alanine and anthranilate from L-kynurenine: step 1/1. It participates in cofactor biosynthesis; NAD(+) biosynthesis; quinolinate from L-kynurenine: step 2/3. In terms of biological role, catalyzes the cleavage of L-kynurenine (L-Kyn) and L-3-hydroxykynurenine (L-3OHKyn) into anthranilic acid (AA) and 3-hydroxyanthranilic acid (3-OHAA), respectively. The sequence is that of Kynureninase 1 (kyn-1) from Neurospora crassa (strain ATCC 24698 / 74-OR23-1A / CBS 708.71 / DSM 1257 / FGSC 987).